A 384-amino-acid polypeptide reads, in one-letter code: Carbamoyl phosphate synthase small chain (384 aa).

A CPSase region spans residues Met-1 to Glu-189. Residues Ser-47, Gly-241, and Gly-243 each coordinate L-glutamine. Positions His-193 to Glu-380 constitute a Glutamine amidotransferase type-1 domain. The Nucleophile role is filled by Cys-269. Residues Leu-270, Gln-273, Asn-311, Gly-313, and Phe-314 each coordinate L-glutamine. Residues His-353 and Glu-355 contribute to the active site.

This sequence belongs to the CarA family. In terms of assembly, composed of two chains; the small (or glutamine) chain promotes the hydrolysis of glutamine to ammonia, which is used by the large (or ammonia) chain to synthesize carbamoyl phosphate. Tetramer of heterodimers (alpha,beta)4.

It carries out the reaction hydrogencarbonate + L-glutamine + 2 ATP + H2O = carbamoyl phosphate + L-glutamate + 2 ADP + phosphate + 2 H(+). The catalysed reaction is L-glutamine + H2O = L-glutamate + NH4(+). It participates in amino-acid biosynthesis; L-arginine biosynthesis; carbamoyl phosphate from bicarbonate: step 1/1. The protein operates within pyrimidine metabolism; UMP biosynthesis via de novo pathway; (S)-dihydroorotate from bicarbonate: step 1/3. Small subunit of the glutamine-dependent carbamoyl phosphate synthetase (CPSase). CPSase catalyzes the formation of carbamoyl phosphate from the ammonia moiety of glutamine, carbonate, and phosphate donated by ATP, constituting the first step of 2 biosynthetic pathways, one leading to arginine and/or urea and the other to pyrimidine nucleotides. The small subunit (glutamine amidotransferase) binds and cleaves glutamine to supply the large subunit with the substrate ammonia. In Photobacterium profundum (strain SS9), this protein is Carbamoyl phosphate synthase small chain.